The chain runs to 294 residues: uncharacterized protein (294 aa).

This is an uncharacterized protein from Mycoplasma pneumoniae (strain ATCC 29342 / M129 / Subtype 1) (Mycoplasmoides pneumoniae).